Here is a 228-residue protein sequence, read N- to C-terminus: CD302 antigen (228 aa).

A signal peptide spans 1–20 (MPHAALSSLVLLSLATAIVA). Over 21-165 (DCPSSTWVQF…YDKKYLSDNH (145 aa)) the chain is Extracellular. The C-type lectin domain maps to 30–149 (FQGSCYAFLQ…CEISSVEGTL (120 aa)). N-linked (GlcNAc...) asparagine glycosylation occurs at N107. A disulfide bridge links C125 with C140. The chain crosses the membrane as a helical span at residues 166 to 186 (ILISTLVIASTVTLAVLGAII). Residues 187–228 (WFLYRRNARSGFTSFSPAPLSPYSDGCALVVAEEDEYAVQLD) are Cytoplasmic-facing.

The protein resides in the membrane. It localises to the cell projection. The protein localises to the filopodium. It is found in the cytoplasm. Its subcellular location is the cell cortex. The protein resides in the microvillus. Its function is as follows. Potential multifunctional C-type lectin receptor that may play roles in endocytosis and phagocytosis as well as in cell adhesion and migration. This is CD302 antigen (Cd302) from Mus musculus (Mouse).